We begin with the raw amino-acid sequence, 636 residues long: Eukaryotic peptide chain release factor GTP-binding subunit ERF3A (636 aa).

Gly residues-rich tracts occupy residues 1–16 (MDPS…GGGS) and 103–116 (AAGG…GAGG). 2 disordered regions span residues 1–54 (MDPS…AAVA) and 90–206 (LRGP…PPGA). Residues 121 to 138 (VESSQDQSCEGSNSTVSM) are compositionally biased toward polar residues. A compositionally biased stretch (acidic residues) spans 183–193 (STQEMMEEEEE). A tr-type G domain is found at 209-435 (KEHVNVVFIG…DNLPNFNRSV (227 aa)). A G1 region spans residues 218–225 (GHVDAGKS). Residue 221 to 226 (DAGKST) coordinates GTP. Residues 274–278 (GKTVE) are G2. Positions 295–298 (DAPG) are G3. Residues 357-360 (NKMD) and 399-401 (SGL) contribute to the GTP site. The tract at residues 357–360 (NKMD) is G4. The interval 399 to 401 (SGL) is G5.

It belongs to the TRAFAC class translation factor GTPase superfamily. Classic translation factor GTPase family. ERF3 subfamily. In terms of assembly, component of the eRF1-eRF3-GTP ternary complex, composed of ETF1/ERF1 and ERF3 (GSPT1/ERF3A or GSPT2/ERF3B) and GTP. Component of the transient SURF (SMG1-UPF1-eRF1-eRF3) complex. The ETF1-GSPT1 complex interacts with JMJD4. Interacts with PABPC1. Interacts with SHFL.

It carries out the reaction GTP + H2O = GDP + phosphate + H(+). Functionally, GTPase component of the eRF1-eRF3-GTP ternary complex, a ternary complex that mediates translation termination in response to the termination codons UAA, UAG and UGA. GSPT1/ERF3A mediates ETF1/ERF1 delivery to stop codons: The eRF1-eRF3-GTP complex binds to a stop codon in the ribosomal A-site. GTP hydrolysis by GSPT1/ERF3A induces a conformational change that leads to its dissociation, permitting ETF1/ERF1 to accommodate fully in the A-site. Component of the transient SURF complex which recruits UPF1 to stalled ribosomes in the context of nonsense-mediated decay (NMD) of mRNAs containing premature stop codons. Required for SHFL-mediated translation termination which inhibits programmed ribosomal frameshifting (-1PRF) of mRNA from viruses and cellular genes. The chain is Eukaryotic peptide chain release factor GTP-binding subunit ERF3A (Gspt1) from Mus musculus (Mouse).